Consider the following 484-residue polypeptide: Cobyric acid synthase (484 aa).

Residues 249–438 (QLRVAVPVFT…LHGIFDRPET (190 aa)) form the GATase cobBQ-type domain. Cys330 serves as the catalytic Nucleophile. His430 is a catalytic residue.

Belongs to the CobB/CobQ family. CobQ subfamily.

Its pathway is cofactor biosynthesis; adenosylcobalamin biosynthesis. In terms of biological role, catalyzes amidations at positions B, D, E, and G on adenosylcobyrinic A,C-diamide. NH(2) groups are provided by glutamine, and one molecule of ATP is hydrogenolyzed for each amidation. The polypeptide is Cobyric acid synthase (Vibrio cholerae serotype O1 (strain ATCC 39541 / Classical Ogawa 395 / O395)).